The primary structure comprises 348 residues: UPF0324 membrane protein BPP3732 (348 aa).

10 consecutive transmembrane segments (helical) span residues 20–39 (GILF…DLPF), 43–62 (FGFS…GNFL), 98–120 (IAAV…LLIG), 135–157 (AMLT…EPTL), 164–186 (SAVA…PVIY), 196–215 (QALG…VVGA), 235–257 (VALL…AAGA), 267–286 (VPWF…LDIL), 299–318 (VFVL…FAQI), and 322–344 (GPRV…YGIV).

It belongs to the UPF0324 family.

The protein resides in the cell membrane. The polypeptide is UPF0324 membrane protein BPP3732 (Bordetella parapertussis (strain 12822 / ATCC BAA-587 / NCTC 13253)).